A 1653-amino-acid polypeptide reads, in one-letter code: Clathrin heavy chain (1653 aa).

Residues 1–483 (MSDLPIEFTE…FDTTLALACY (483 aa)) form a globular terminal domain region. WD40-like repeat stretches follow at residues 23 to 66 (FLDF…KNMG), 67 to 107 (GDSA…LDEP), 108 to 152 (VIFW…ANLN), 153 to 198 (NTQI…QAID), 199 to 263 (GHVA…PDAT), 264 to 307 (NDFP…ITAE), and 308 to 336 (SVFT…VEIS). Positions 453–469 (EKWLKEDKLECSEELGD) are binding site for the uncoating ATPase, involved in lattice disassembly. Positions 484 to 527 (LRAGAHAKVISCLAELQQFEKIIPYCQKVGYQPNFLVLISSLIR) are flexible linker. The tract at residues 528–1653 (SSPDRASEFA…SAMNVQPTGF (1126 aa)) is heavy chain arm. 7 CHCR repeats span residues 543-689 (NPET…QTVV), 692-834 (ATKF…DEAF), 839-978 (LQSV…QLID), 985-1130 (IPEL…IPDA), 1134-1275 (YIKA…FKLA), 1280-1426 (LNLI…SLLV), and 1429-1572 (LTSL…REGF). Lysine 1107 participates in a covalent cross-link: Glycyl lysine isopeptide (Lys-Gly) (interchain with G-Cter in ubiquitin). Residues 1219–1528 (AARLCYSAVS…LLYRRNKKWA (310 aa)) are involved in binding clathrin light chain.

The protein belongs to the clathrin heavy chain family. Clathrin triskelions, composed of 3 heavy chains and 3 light chains, are the basic subunits of the clathrin coat. Interacts with the auxilin-like clathrin uncoating factor SWA2. Interacts with INP53.

The protein resides in the cytoplasmic vesicle membrane. It is found in the membrane. Its subcellular location is the coated pit. Clathrin is the major protein of the polyhedral coat of coated pits and vesicles. In yeast, it is involved in the retention of proteins in an intracellular membrane compartment, presumably the trans-Golgi. The polypeptide is Clathrin heavy chain (CHC1) (Saccharomyces cerevisiae (strain ATCC 204508 / S288c) (Baker's yeast)).